The following is a 193-amino-acid chain: Transcriptional regulator RamR (193 aa).

The region spanning 7-66 is the HTH tetR-type domain; sequence EDKKQALLEAATQAIAQSGIAASTAVIARNAGVAEGTLFRYFATKDELINTLYLHLKQDL. Positions 29–48 form a DNA-binding region, H-T-H motif; sequence STAVIARNAGVAEGTLFRYF.

Homodimer. May bind DNA either as a homodimer or as a pair of homodimers. Various chemicals reduce DNA-binding in vitro, including bile acids, such as cholic and chenodeoxycholic acids, and antimicrobial drugs, such as berberine, crystal violet, dequalinium, ethidium bromide and rhodamine 6G. Binds small regulatory RNA StyR3.

In terms of biological role, transcriptional regulator. Represses the transcription of the transcriptional activator RamA and, thereby, leads to repression of the expression of the efflux pump subunits AcrA and AcrB, and TolC. Acts by binding directly to the promoter region of the ramA gene. Promoter binding may be inhibited partially by the small regulatory RNA StyR3, perhaps thereby ensuring a basal level of expression of RamA. The chain is Transcriptional regulator RamR from Salmonella typhimurium (strain LT2 / SGSC1412 / ATCC 700720).